The primary structure comprises 352 residues: Glycerol-1-phosphate dehydrogenase [NAD(P)+] (352 aa).

Residues 98 to 102 (GKAID) and 120 to 123 (TAAS) each bind NAD(+). Residue D125 participates in substrate binding. S129 contacts NAD(+). D172 lines the substrate pocket. Residues D172 and H252 each contribute to the Zn(2+) site. H256 provides a ligand contact to substrate. Position 268 (H268) interacts with Zn(2+).

Belongs to the glycerol-1-phosphate dehydrogenase family. Zn(2+) is required as a cofactor.

Its subcellular location is the cytoplasm. The enzyme catalyses sn-glycerol 1-phosphate + NAD(+) = dihydroxyacetone phosphate + NADH + H(+). The catalysed reaction is sn-glycerol 1-phosphate + NADP(+) = dihydroxyacetone phosphate + NADPH + H(+). It participates in membrane lipid metabolism; glycerophospholipid metabolism. In terms of biological role, catalyzes the NAD(P)H-dependent reduction of dihydroxyacetonephosphate (DHAP or glycerone phosphate) to glycerol 1-phosphate (G1P). The G1P thus generated is used as the glycerophosphate backbone of phospholipids in the cellular membranes of Archaea. This Haloarcula marismortui (strain ATCC 43049 / DSM 3752 / JCM 8966 / VKM B-1809) (Halobacterium marismortui) protein is Glycerol-1-phosphate dehydrogenase [NAD(P)+].